Here is a 250-residue protein sequence, read N- to C-terminus: 5-oxoprolinase subunit A (250 aa).

This sequence belongs to the LamB/PxpA family. Forms a complex composed of PxpA, PxpB and PxpC.

It catalyses the reaction 5-oxo-L-proline + ATP + 2 H2O = L-glutamate + ADP + phosphate + H(+). Functionally, catalyzes the cleavage of 5-oxoproline to form L-glutamate coupled to the hydrolysis of ATP to ADP and inorganic phosphate. This is 5-oxoprolinase subunit A from Paraburkholderia xenovorans (strain LB400).